We begin with the raw amino-acid sequence, 471 residues long: Alpha-galactosidase 5 (471 aa).

The signal sequence occupies residues 1–18 (MFAFYFLTACTTLKGVFG). Cys42 and Cys74 form a disulfide bridge. Residues Asp72 and Asp73 each contribute to the substrate site. A glycan (N-linked (GlcNAc...) asparagine) is linked at Asn105. Cys121 and Cys151 form a disulfide bridge. Lys147 is a substrate binding site. The Nucleophile role is filled by Asp149. A glycan (N-linked (GlcNAc...) asparagine) is linked at Asn175. Residue Arg205 coordinates substrate. Asp209 functions as the Proton donor in the catalytic mechanism. Cystine bridges form between Cys221–Cys237 and Cys223–Cys230. Gln251 is a binding site for substrate. Residues Asn270, Asn370, Asn403, Asn422, Asn435, and Asn454 are each glycosylated (N-linked (GlcNAc...) asparagine).

It belongs to the glycosyl hydrolase 27 family. In terms of assembly, homotetramer.

It localises to the secreted. The enzyme catalyses Hydrolysis of terminal, non-reducing alpha-D-galactose residues in alpha-D-galactosides, including galactose oligosaccharides, galactomannans and galactolipids.. The chain is Alpha-galactosidase 5 (MEL5) from Saccharomyces cerevisiae (Baker's yeast).